A 379-amino-acid chain; its full sequence is Chaperone protein DnaJ (379 aa).

The J domain occupies 7–72 (CYYETLEVDR…DKRAAYDRYG (66 aa)). The CR-type zinc-finger motif lies at 135-213 (GKTAQIEIPV…CSGAGRIERE (79 aa)). Residues C148, C151, C165, C168, C187, C190, C201, and C204 each coordinate Zn(2+). CXXCXGXG motif repeat units lie at residues 148 to 155 (CESCSGTG), 165 to 172 (CSMCGGAG), 187 to 194 (CPGCQGRG), and 201 to 208 (CPACSGAG).

Belongs to the DnaJ family. As to quaternary structure, homodimer. It depends on Zn(2+) as a cofactor.

Its subcellular location is the cytoplasm. Participates actively in the response to hyperosmotic and heat shock by preventing the aggregation of stress-denatured proteins and by disaggregating proteins, also in an autonomous, DnaK-independent fashion. Unfolded proteins bind initially to DnaJ; upon interaction with the DnaJ-bound protein, DnaK hydrolyzes its bound ATP, resulting in the formation of a stable complex. GrpE releases ADP from DnaK; ATP binding to DnaK triggers the release of the substrate protein, thus completing the reaction cycle. Several rounds of ATP-dependent interactions between DnaJ, DnaK and GrpE are required for fully efficient folding. Also involved, together with DnaK and GrpE, in the DNA replication of plasmids through activation of initiation proteins. The sequence is that of Chaperone protein DnaJ from Rhodopseudomonas palustris (strain BisB18).